A 572-amino-acid polypeptide reads, in one-letter code: Proline--tRNA ligase (572 aa).

It belongs to the class-II aminoacyl-tRNA synthetase family. ProS type 1 subfamily. As to quaternary structure, homodimer.

Its subcellular location is the cytoplasm. The enzyme catalyses tRNA(Pro) + L-proline + ATP = L-prolyl-tRNA(Pro) + AMP + diphosphate. In terms of biological role, catalyzes the attachment of proline to tRNA(Pro) in a two-step reaction: proline is first activated by ATP to form Pro-AMP and then transferred to the acceptor end of tRNA(Pro). As ProRS can inadvertently accommodate and process non-cognate amino acids such as alanine and cysteine, to avoid such errors it has two additional distinct editing activities against alanine. One activity is designated as 'pretransfer' editing and involves the tRNA(Pro)-independent hydrolysis of activated Ala-AMP. The other activity is designated 'posttransfer' editing and involves deacylation of mischarged Ala-tRNA(Pro). The misacylated Cys-tRNA(Pro) is not edited by ProRS. The polypeptide is Proline--tRNA ligase (Escherichia coli O9:H4 (strain HS)).